We begin with the raw amino-acid sequence, 196 residues long: Putative NADH dehydrogenase/NAD(P)H nitroreductase XOO4023 (196 aa).

Belongs to the nitroreductase family. HadB/RutE subfamily. The cofactor is FMN.

The protein is Putative NADH dehydrogenase/NAD(P)H nitroreductase XOO4023 of Xanthomonas oryzae pv. oryzae (strain MAFF 311018).